Consider the following 433-residue polypeptide: Phosphomethylpyrimidine synthase 1 (433 aa).

Substrate-binding positions include Asn66, Met94, Tyr123, His162, 184–186 (SRG), 225–228 (DALR), and Glu264. A Zn(2+)-binding site is contributed by His268. Residue Tyr291 coordinates substrate. Position 332 (His332) interacts with Zn(2+). Positions 408, 411, and 415 each coordinate [4Fe-4S] cluster.

Belongs to the ThiC family. The cofactor is [4Fe-4S] cluster.

It carries out the reaction 5-amino-1-(5-phospho-beta-D-ribosyl)imidazole + S-adenosyl-L-methionine = 4-amino-2-methyl-5-(phosphooxymethyl)pyrimidine + CO + 5'-deoxyadenosine + formate + L-methionine + 3 H(+). It functions in the pathway cofactor biosynthesis; thiamine diphosphate biosynthesis. In terms of biological role, catalyzes the synthesis of the hydroxymethylpyrimidine phosphate (HMP-P) moiety of thiamine from aminoimidazole ribotide (AIR) in a radical S-adenosyl-L-methionine (SAM)-dependent reaction. The protein is Phosphomethylpyrimidine synthase 1 of Saccharolobus solfataricus (strain ATCC 35092 / DSM 1617 / JCM 11322 / P2) (Sulfolobus solfataricus).